A 177-amino-acid chain; its full sequence is ATP synthase subunit delta (177 aa).

Belongs to the ATPase delta chain family. F-type ATPases have 2 components, F(1) - the catalytic core - and F(0) - the membrane proton channel. F(1) has five subunits: alpha(3), beta(3), gamma(1), delta(1), epsilon(1). F(0) has three main subunits: a(1), b(2) and c(10-14). The alpha and beta chains form an alternating ring which encloses part of the gamma chain. F(1) is attached to F(0) by a central stalk formed by the gamma and epsilon chains, while a peripheral stalk is formed by the delta and b chains.

The protein resides in the cell inner membrane. F(1)F(0) ATP synthase produces ATP from ADP in the presence of a proton or sodium gradient. F-type ATPases consist of two structural domains, F(1) containing the extramembraneous catalytic core and F(0) containing the membrane proton channel, linked together by a central stalk and a peripheral stalk. During catalysis, ATP synthesis in the catalytic domain of F(1) is coupled via a rotary mechanism of the central stalk subunits to proton translocation. In terms of biological role, this protein is part of the stalk that links CF(0) to CF(1). It either transmits conformational changes from CF(0) to CF(1) or is implicated in proton conduction. The chain is ATP synthase subunit delta from Neisseria meningitidis serogroup B (strain ATCC BAA-335 / MC58).